Consider the following 96-residue polypeptide: Co-chaperonin GroES (96 aa).

This sequence belongs to the GroES chaperonin family. Heptamer of 7 subunits arranged in a ring. Interacts with the chaperonin GroEL.

The protein localises to the cytoplasm. In terms of biological role, together with the chaperonin GroEL, plays an essential role in assisting protein folding. The GroEL-GroES system forms a nano-cage that allows encapsulation of the non-native substrate proteins and provides a physical environment optimized to promote and accelerate protein folding. GroES binds to the apical surface of the GroEL ring, thereby capping the opening of the GroEL channel. This is Co-chaperonin GroES from Alcanivorax borkumensis (strain ATCC 700651 / DSM 11573 / NCIMB 13689 / SK2).